Here is a 63-residue protein sequence, read N- to C-terminus: UPF0512 protein X (63 aa).

This sequence belongs to the UPF0512 family.

This is UPF0512 protein X from Dictyostelium discoideum (Social amoeba).